The following is a 572-amino-acid chain: Proline--tRNA ligase (572 aa).

This sequence belongs to the class-II aminoacyl-tRNA synthetase family. ProS type 1 subfamily. In terms of assembly, homodimer.

The protein localises to the cytoplasm. The catalysed reaction is tRNA(Pro) + L-proline + ATP = L-prolyl-tRNA(Pro) + AMP + diphosphate. Catalyzes the attachment of proline to tRNA(Pro) in a two-step reaction: proline is first activated by ATP to form Pro-AMP and then transferred to the acceptor end of tRNA(Pro). As ProRS can inadvertently accommodate and process non-cognate amino acids such as alanine and cysteine, to avoid such errors it has two additional distinct editing activities against alanine. One activity is designated as 'pretransfer' editing and involves the tRNA(Pro)-independent hydrolysis of activated Ala-AMP. The other activity is designated 'posttransfer' editing and involves deacylation of mischarged Ala-tRNA(Pro). The misacylated Cys-tRNA(Pro) is not edited by ProRS. The polypeptide is Proline--tRNA ligase (Dichelobacter nodosus (strain VCS1703A)).